The sequence spans 214 residues: GTP cyclohydrolase 1 (214 aa).

Zn(2+) contacts are provided by Cys-108, His-111, and Cys-179.

The protein belongs to the GTP cyclohydrolase I family. Toroid-shaped homodecamer, composed of two pentamers of five dimers.

The catalysed reaction is GTP + H2O = 7,8-dihydroneopterin 3'-triphosphate + formate + H(+). Its pathway is cofactor biosynthesis; 7,8-dihydroneopterin triphosphate biosynthesis; 7,8-dihydroneopterin triphosphate from GTP: step 1/1. This chain is GTP cyclohydrolase 1, found in Shewanella putrefaciens (strain CN-32 / ATCC BAA-453).